The sequence spans 691 residues: MARDFPLERVRNIGIAAHIDAGKTTTTERILFYSGVVHKIGEVHDGAAVTDWMAQERERGITITAAAISTSWQDHRINIIDTPGHVDFTIEVERSMRVLDGVIAVFCAVGGVQPQSETVWRQADRYSVPRMVFVNKMDRTGADFLKVNKQIKDRLKANALPIQLPIGAEGDLTGIIDLVANKAYLYKNDLGTDIEEAPIPSEMEEEAAEWRFKLMESVAENDEELIEIFLETGELSEEQLKKGIREGVLKHGLVPVLCGSAFKNKGVQLVLDAVVDYLPAPVDVKPIQGVLPSGKEDIRPSDDNAPFSALAFKVMSDPYGKLTFVRMYSGVLSKGSYVMNSTKDAKERISRLVILKADEREEVDELRAGDLGAVLGLKNTTTGDTLCNTEDPIVLETLFIPEPVISVAVEPKTKGDMEKLSKALTALSEEDPTFRVSTDPETNQTVIAGMGELHLEILVDRMLREFKVEANIGAPQVSYRETIRSSSKGEGKYARQTGGKGQYGHVIIEMEPAEVGKGFEFVNKIVGGAVPKEYIGPASNGMKETCESGVLAGYPLIDVKVTLVDGSFHDVDSSEMAFKIAGSMAFKDGVKKCNPVLLEPMMKVEVESPDDFLGSVIGDLSSRRGQVEGQSVDDGLSKVQAKVPLAEMFGYATQLRSMTQGRGIFSMEFANYEEVPRNVAEAIISKNQGNS.

Positions 8 to 282 constitute a tr-type G domain; the sequence is ERVRNIGIAA…AVVDYLPAPV (275 aa). GTP-binding positions include 17-24, 81-85, and 135-138; these read AHIDAGKT, DTPGH, and NKMD.

This sequence belongs to the TRAFAC class translation factor GTPase superfamily. Classic translation factor GTPase family. EF-G/EF-2 subfamily.

Its subcellular location is the cytoplasm. Its function is as follows. Catalyzes the GTP-dependent ribosomal translocation step during translation elongation. During this step, the ribosome changes from the pre-translocational (PRE) to the post-translocational (POST) state as the newly formed A-site-bound peptidyl-tRNA and P-site-bound deacylated tRNA move to the P and E sites, respectively. Catalyzes the coordinated movement of the two tRNA molecules, the mRNA and conformational changes in the ribosome. The sequence is that of Elongation factor G from Prochlorococcus marinus (strain AS9601).